A 330-amino-acid polypeptide reads, in one-letter code: L-tryptophan isonitrile synthase AmbI2 (330 aa).

It belongs to the isocyanide synthase family.

The enzyme catalyses D-ribulose 5-phosphate + L-tryptophan = (2S)-3-(1H-indol-3-yl)-2-isocyanopropanoate + hydroxyacetone + formaldehyde + phosphate + H2O + H(+). Functionally, involved in the biosynthesis of ambiguines, a family of hapalindole-type alkaloids. Responsible for the synthesis of the isonitrile group on tryptophan using ribulose 5-phosphate as the source of the carbon atom. The sequence is that of L-tryptophan isonitrile synthase AmbI2 from Fischerella ambigua (strain UTEX 1903).